Here is an 88-residue protein sequence, read N- to C-terminus: MAIKVRLPASINQGDLEIDAEKLTVNQLIALLSQITGKDLEKILKRDGELSPFISIFVNGRNVRYAEGLETEVRSGDEVSIVPTVAGG.

The protein belongs to the sulfur carrier protein CysO family.

This chain is Putative sulfur carrier protein AF_0552, found in Archaeoglobus fulgidus (strain ATCC 49558 / DSM 4304 / JCM 9628 / NBRC 100126 / VC-16).